Reading from the N-terminus, the 253-residue chain is Ubiquinone/menaquinone biosynthesis C-methyltransferase UbiE (253 aa).

S-adenosyl-L-methionine contacts are provided by residues Thr-76, Asp-97, and 125 to 126 (DA).

The protein belongs to the class I-like SAM-binding methyltransferase superfamily. MenG/UbiE family.

The catalysed reaction is a 2-demethylmenaquinol + S-adenosyl-L-methionine = a menaquinol + S-adenosyl-L-homocysteine + H(+). It catalyses the reaction a 2-methoxy-6-(all-trans-polyprenyl)benzene-1,4-diol + S-adenosyl-L-methionine = a 5-methoxy-2-methyl-3-(all-trans-polyprenyl)benzene-1,4-diol + S-adenosyl-L-homocysteine + H(+). Its pathway is quinol/quinone metabolism; menaquinone biosynthesis; menaquinol from 1,4-dihydroxy-2-naphthoate: step 2/2. The protein operates within cofactor biosynthesis; ubiquinone biosynthesis. In terms of biological role, methyltransferase required for the conversion of demethylmenaquinol (DMKH2) to menaquinol (MKH2) and the conversion of 2-polyprenyl-6-methoxy-1,4-benzoquinol (DDMQH2) to 2-polyprenyl-3-methyl-6-methoxy-1,4-benzoquinol (DMQH2). The sequence is that of Ubiquinone/menaquinone biosynthesis C-methyltransferase UbiE from Azotobacter vinelandii (strain DJ / ATCC BAA-1303).